A 306-amino-acid polypeptide reads, in one-letter code: uncharacterized protein (306 aa).

To M.jannaschii MJ0658.

This is an uncharacterized protein from Methanothermobacter thermautotrophicus (strain ATCC 29096 / DSM 1053 / JCM 10044 / NBRC 100330 / Delta H) (Methanobacterium thermoautotrophicum).